The primary structure comprises 126 residues: Transcription antitermination protein NusB (126 aa).

This sequence belongs to the NusB family.

Involved in transcription antitermination. Required for transcription of ribosomal RNA (rRNA) genes. Binds specifically to the boxA antiterminator sequence of the ribosomal RNA (rrn) operons. The polypeptide is Transcription antitermination protein NusB (Oceanobacillus iheyensis (strain DSM 14371 / CIP 107618 / JCM 11309 / KCTC 3954 / HTE831)).